We begin with the raw amino-acid sequence, 542 residues long: Chaperonin GroEL (542 aa).

Residues 29–32 (TIGP), 86–90 (DGTTT), glycine 413, 477–479 (NAA), and aspartate 493 contribute to the ATP site.

The protein belongs to the chaperonin (HSP60) family. As to quaternary structure, forms a cylinder of 14 subunits composed of two heptameric rings stacked back-to-back. Interacts with the co-chaperonin GroES.

The protein localises to the cytoplasm. The enzyme catalyses ATP + H2O + a folded polypeptide = ADP + phosphate + an unfolded polypeptide.. In terms of biological role, together with its co-chaperonin GroES, plays an essential role in assisting protein folding. The GroEL-GroES system forms a nano-cage that allows encapsulation of the non-native substrate proteins and provides a physical environment optimized to promote and accelerate protein folding. This is Chaperonin GroEL from Lactobacillus acidophilus (strain ATCC 700396 / NCK56 / N2 / NCFM).